Consider the following 156-residue polypeptide: Small ribosomal subunit protein uS7 (156 aa).

The protein belongs to the universal ribosomal protein uS7 family. In terms of assembly, part of the 30S ribosomal subunit. Contacts proteins S9 and S11.

One of the primary rRNA binding proteins, it binds directly to 16S rRNA where it nucleates assembly of the head domain of the 30S subunit. Is located at the subunit interface close to the decoding center, probably blocks exit of the E-site tRNA. The protein is Small ribosomal subunit protein uS7 of Crocosphaera subtropica (strain ATCC 51142 / BH68) (Cyanothece sp. (strain ATCC 51142)).